A 318-amino-acid chain; its full sequence is Taste receptor type 2 member 14 (318 aa).

Residues Met-1 to Asn-7 are Extracellular-facing. The helical transmembrane segment at Ile-8–Ala-28 threads the bilayer. The Cytoplasmic segment spans residues Leu-29 to Arg-55. The chain crosses the membrane as a helical span at residues Ile-56–Phe-76. The Extracellular portion of the chain corresponds to Ala-77–Asn-87. 2 residues coordinate cholesterol: Thr-86 and Trp-89. The chain crosses the membrane as a helical span at residues Ile-88–Phe-108. The Cytoplasmic segment spans residues Leu-109–Val-129. Residues Val-130–Ile-150 form a helical membrane-spanning segment. Residues His-151–Ser-184 are Extracellular-facing. Residues Asn-153 and Asn-162 are each glycosylated (N-linked (GlcNAc...) asparagine). Ala-180 serves as a coordination point for cholesterol. The helical transmembrane segment at Val-185 to Leu-205 threads the bilayer. Topologically, residues Trp-206–Gln-232 are cytoplasmic. A helical transmembrane segment spans residues Thr-233–Trp-253. The Extracellular segment spans residues Thr-254–Asn-261. Residues Leu-262 to Ile-282 form a helical membrane-spanning segment. Cholesterol contacts are provided by Leu-265 and Val-268. The Cytoplasmic segment spans residues Leu-283 to Ser-317.

Belongs to the G-protein coupled receptor T2R family. Core component of the TAS2R14-GNAI1 complex, consisting of TAS2R14, GNAI1, GNB1 and GNG2; within the complex interacts with GNAI1. Core component of the TAS2R14-GNAT3 complex, consisting of TAS2R14, GNAT3, GNB1 and GNG2; within the complex interacts with GNAT3. Core component of the TAS2R14-GNAS2 complex, consisting of TAS2R14, GNAS2, GNB1 and GNG2; within the complex interacts with GNAS2.

The protein resides in the membrane. It carries out the reaction Ca(2+)(in) = Ca(2+)(out). It catalyses the reaction 3',5'-cyclic AMP(in) = 3',5'-cyclic AMP(out). Its activity is regulated as follows. Basal activity is enhanced by binding to bitter tastants, such as flufenamic acid and aristolochic acid. Regulated by cholesterol in a concentration-dependent manner. Its function is as follows. Gustducin-linked G-protein coupled receptor that plays a role in the perception of bitterness. The activity of this receptor stimulates GNAT3, activating the gustducin G-protein pathway. Likely plays a role in sensing the chemical composition of the gastrointestinal content and other extra-oral tissues via the inhibitory G-protein pathways. This is Taste receptor type 2 member 14 (TAS2R14) from Pongo pygmaeus (Bornean orangutan).